Consider the following 357-residue polypeptide: Histidinol-phosphate aminotransferase (357 aa).

K221 is subject to N6-(pyridoxal phosphate)lysine.

It belongs to the class-II pyridoxal-phosphate-dependent aminotransferase family. Histidinol-phosphate aminotransferase subfamily. Requires pyridoxal 5'-phosphate as cofactor.

It catalyses the reaction L-histidinol phosphate + 2-oxoglutarate = 3-(imidazol-4-yl)-2-oxopropyl phosphate + L-glutamate. It functions in the pathway amino-acid biosynthesis; L-histidine biosynthesis; L-histidine from 5-phospho-alpha-D-ribose 1-diphosphate: step 7/9. This is Histidinol-phosphate aminotransferase (hisC) from Sulfurisphaera tokodaii (strain DSM 16993 / JCM 10545 / NBRC 100140 / 7) (Sulfolobus tokodaii).